The following is a 235-amino-acid chain: Ribonuclease P protein component 3 (235 aa).

Belongs to the eukaryotic/archaeal RNase P protein component 3 family. In terms of assembly, consists of a catalytic RNA component and at least 4-5 protein subunits.

It is found in the cytoplasm. The enzyme catalyses Endonucleolytic cleavage of RNA, removing 5'-extranucleotides from tRNA precursor.. In terms of biological role, part of ribonuclease P, a protein complex that generates mature tRNA molecules by cleaving their 5'-ends. The chain is Ribonuclease P protein component 3 from Haloarcula marismortui (strain ATCC 43049 / DSM 3752 / JCM 8966 / VKM B-1809) (Halobacterium marismortui).